The chain runs to 201 residues: MSFSPSFDALVQALTCLSGVGKKTAQRMALDLLLKKNAEAATLAKALTTALATVQRCRYCRNLSDAEVCLLCADPLRNRQQICVVETPADVIAIEQATDYRGLFFVLMGHIAPLDGMGPEALGMDILDDRLANEAISELVLATNATLEGETTAYFLAELAAKHGIQATRLAYGVPLGSELSYIDKQTLHHAFQSRDHYHEL.

A C4-type zinc finger spans residues 57-72 (CRYCRNLSDAEVCLLC). Residues 80–175 (QQICVVETPA…QATRLAYGVP (96 aa)) enclose the Toprim domain.

Belongs to the RecR family.

Its function is as follows. May play a role in DNA repair. It seems to be involved in an RecBC-independent recombinational process of DNA repair. It may act with RecF and RecO. The chain is Recombination protein RecR from Dichelobacter nodosus (strain VCS1703A).